The chain runs to 363 residues: UDP-N-acetylglucosamine--N-acetylmuramyl-(pentapeptide) pyrophosphoryl-undecaprenol N-acetylglucosamine transferase (363 aa).

Residues 14 to 16 (TGG), arginine 171, serine 200, and glutamine 290 contribute to the UDP-N-acetyl-alpha-D-glucosamine site.

The protein belongs to the glycosyltransferase 28 family. MurG subfamily.

The protein localises to the cell inner membrane. The catalysed reaction is di-trans,octa-cis-undecaprenyl diphospho-N-acetyl-alpha-D-muramoyl-L-alanyl-D-glutamyl-meso-2,6-diaminopimeloyl-D-alanyl-D-alanine + UDP-N-acetyl-alpha-D-glucosamine = di-trans,octa-cis-undecaprenyl diphospho-[N-acetyl-alpha-D-glucosaminyl-(1-&gt;4)]-N-acetyl-alpha-D-muramoyl-L-alanyl-D-glutamyl-meso-2,6-diaminopimeloyl-D-alanyl-D-alanine + UDP + H(+). It functions in the pathway cell wall biogenesis; peptidoglycan biosynthesis. Functionally, cell wall formation. Catalyzes the transfer of a GlcNAc subunit on undecaprenyl-pyrophosphoryl-MurNAc-pentapeptide (lipid intermediate I) to form undecaprenyl-pyrophosphoryl-MurNAc-(pentapeptide)GlcNAc (lipid intermediate II). This chain is UDP-N-acetylglucosamine--N-acetylmuramyl-(pentapeptide) pyrophosphoryl-undecaprenol N-acetylglucosamine transferase, found in Borrelia garinii subsp. bavariensis (strain ATCC BAA-2496 / DSM 23469 / PBi) (Borreliella bavariensis).